A 600-amino-acid polypeptide reads, in one-letter code: Sulfite reductase [NADPH] flavoprotein alpha-component (600 aa).

One can recognise a Flavodoxin-like domain in the interval 63 to 201 (ITLISASQTG…VADQWRKQLT (139 aa)). Residues 69 to 74 (SQTGNA), 116 to 119 (STQG), and 152 to 161 (LGDTSYERFC) contribute to the FMN site. An FAD-binding FR-type domain is found at 235-449 (QAPLTAALAT…IEHNDNFRLP (215 aa)). FAD is bound by residues Thr-323, His-357, 387 to 390 (RLYS), 405 to 407 (TVG), Tyr-411, and 420 to 423 (GGAS). NADP(+)-binding positions include 520 to 521 (SR), 526 to 530 (KIYVQ), and Asp-562. Tyr-600 contributes to the FAD binding site.

It belongs to the NADPH-dependent sulphite reductase flavoprotein subunit CysJ family. In the N-terminal section; belongs to the flavodoxin family. The protein in the C-terminal section; belongs to the flavoprotein pyridine nucleotide cytochrome reductase family. As to quaternary structure, alpha(8)-beta(8). The alpha component is a flavoprotein, the beta component is a hemoprotein. Requires FAD as cofactor. The cofactor is FMN.

It catalyses the reaction hydrogen sulfide + 3 NADP(+) + 3 H2O = sulfite + 3 NADPH + 4 H(+). The protein operates within sulfur metabolism; hydrogen sulfide biosynthesis; hydrogen sulfide from sulfite (NADPH route): step 1/1. Its function is as follows. Component of the sulfite reductase complex that catalyzes the 6-electron reduction of sulfite to sulfide. This is one of several activities required for the biosynthesis of L-cysteine from sulfate. The flavoprotein component catalyzes the electron flow from NADPH -&gt; FAD -&gt; FMN to the hemoprotein component. In Photorhabdus laumondii subsp. laumondii (strain DSM 15139 / CIP 105565 / TT01) (Photorhabdus luminescens subsp. laumondii), this protein is Sulfite reductase [NADPH] flavoprotein alpha-component.